A 76-amino-acid chain; its full sequence is Spermatid nuclear transition protein 3 (76 aa).

Over residues 1 to 11 (AKVTEKSWQPQ) the composition is skewed to polar residues. Disordered stretches follow at residues 1 to 34 (AKVTEKSWQPQTTSTKRWKKRKTPSQPRSRGKVR) and 56 to 76 (VITTSRRQKRARRANKFETIP). Residues 16 to 34 (KRWKKRKTPSQPRSRGKVR) are compositionally biased toward basic residues.

It is found in the nucleus. The protein localises to the chromosome. In terms of biological role, involved in nuclear basic protein transition: histones are replaced by spermatid specific proteins which are themselves replaced by protamines in late spermatids. The polypeptide is Spermatid nuclear transition protein 3 (TNP3) (Sus scrofa (Pig)).